A 379-amino-acid chain; its full sequence is MIEHFISDPHNVKFVESIFNKKLFSSISTDYPLVIISDSHVAEKILPPVLGFIDSLGYRVILLTFPPGEKNKTWEIFISLQNQLVDHGVSLGATIMGIGGGIVLDMAGFLASTYCRGIQLFLIPTTMTAMIDASIGGKNGINLRGLKNRLGTFYPPKDVWVCPEFLTTLSKQEWCYGISESIKHGCVADAYIWEFLHSYGDTLFSSRTILNEFIKRNCQIKAVIAAKDPKDKNLRKILNFGHTIAHALETLSEGHIPHGLAVSVGMMIEIKISLESGIMKNPSLVEQLYNLSNNFNLPTTLEELRDLIPQHFLHRFYHPENIITTLGYDKKNLSNKALRMVMIEHLGRVAPCSGSYCATPKMGILYEVLKSECDAVRNN.

Residues Pro67–Lys72, Gly101–Asp105, Thr125–Thr126, Lys138, and Lys147 each bind NAD(+). Residues Glu180, His242, and His258 each contribute to the Zn(2+) site.

It belongs to the sugar phosphate cyclases superfamily. Dehydroquinate synthase family. NAD(+) serves as cofactor. The cofactor is Co(2+). It depends on Zn(2+) as a cofactor.

It localises to the cytoplasm. The enzyme catalyses 7-phospho-2-dehydro-3-deoxy-D-arabino-heptonate = 3-dehydroquinate + phosphate. It participates in metabolic intermediate biosynthesis; chorismate biosynthesis; chorismate from D-erythrose 4-phosphate and phosphoenolpyruvate: step 2/7. Its function is as follows. Catalyzes the conversion of 3-deoxy-D-arabino-heptulosonate 7-phosphate (DAHP) to dehydroquinate (DHQ). The chain is 3-dehydroquinate synthase from Chlamydia felis (strain Fe/C-56) (Chlamydophila felis).